We begin with the raw amino-acid sequence, 95 residues long: UPF0235 protein Swoo_1329 (95 aa).

The protein belongs to the UPF0235 family.

The sequence is that of UPF0235 protein Swoo_1329 from Shewanella woodyi (strain ATCC 51908 / MS32).